A 207-amino-acid chain; its full sequence is Protein GrpE (207 aa).

Belongs to the GrpE family. In terms of assembly, homodimer.

The protein resides in the cytoplasm. In terms of biological role, participates actively in the response to hyperosmotic and heat shock by preventing the aggregation of stress-denatured proteins, in association with DnaK and GrpE. It is the nucleotide exchange factor for DnaK and may function as a thermosensor. Unfolded proteins bind initially to DnaJ; upon interaction with the DnaJ-bound protein, DnaK hydrolyzes its bound ATP, resulting in the formation of a stable complex. GrpE releases ADP from DnaK; ATP binding to DnaK triggers the release of the substrate protein, thus completing the reaction cycle. Several rounds of ATP-dependent interactions between DnaJ, DnaK and GrpE are required for fully efficient folding. The protein is Protein GrpE of Pelodictyon phaeoclathratiforme (strain DSM 5477 / BU-1).